The following is a 1153-amino-acid chain: ATP-dependent helicase/deoxyribonuclease subunit B (1153 aa).

Position 8-15 (8-15) interacts with ATP; that stretch reads GRAGSGKS. 4 residues coordinate [4Fe-4S] cluster: cysteine 786, cysteine 1104, cysteine 1107, and cysteine 1113.

The protein belongs to the helicase family. AddB/RexB type 1 subfamily. Heterodimer of AddA and AddB. The cofactor is Mg(2+). [4Fe-4S] cluster serves as cofactor.

The heterodimer acts as both an ATP-dependent DNA helicase and an ATP-dependent, dual-direction single-stranded exonuclease. Recognizes the chi site generating a DNA molecule suitable for the initiation of homologous recombination. The AddB subunit has 5' -&gt; 3' nuclease activity but not helicase activity. In Clostridium acetobutylicum (strain ATCC 824 / DSM 792 / JCM 1419 / IAM 19013 / LMG 5710 / NBRC 13948 / NRRL B-527 / VKM B-1787 / 2291 / W), this protein is ATP-dependent helicase/deoxyribonuclease subunit B.